A 443-amino-acid polypeptide reads, in one-letter code: MSKTYHFIGIKGSGMSALALMLHQMGHNVQGSDVDKYYFTQRGLEQAGVTILPFSPNNISEDLEIIAGNAFRPDNNEELAYVIEKGYQFKRYHEFLGDFMRQFTSLGVAGAHGKTSTTGLLAHVLKNITDTSFLIGDGTGRGSANANYFVFEADEYERHFMPYHPEYSIITNIDFDHPDYFTGLEDVFNAFNDYAKQVQKGLFIYGEDPKLHEITSEAPIYYYGFEDSNDFIAKDITRTVNGSDFKVFYNQEEIGQFHVPAYGKHNILNATAVIANLYIMGIDMALVAEHLKTFSGVKRRFTEKIIDDTVIIDDFAHHPTEIIATLDAARQKYPSKEIVAIFQPHTFTRTIALLDEFAHALSQADSVYLAQIYGSAREVDNGEVKVEDLAAKIVKHSDLVTVENVSPLLNHDNAVYVFMGAGDIQLYERSFEELLANLTKNTQ.

110–116 (GAHGKTS) serves as a coordination point for ATP.

It belongs to the MurCDEF family.

Its subcellular location is the cytoplasm. The enzyme catalyses UDP-N-acetyl-alpha-D-muramate + L-alanine + ATP = UDP-N-acetyl-alpha-D-muramoyl-L-alanine + ADP + phosphate + H(+). The protein operates within cell wall biogenesis; peptidoglycan biosynthesis. In terms of biological role, cell wall formation. The protein is UDP-N-acetylmuramate--L-alanine ligase of Streptococcus agalactiae serotype V (strain ATCC BAA-611 / 2603 V/R).